The chain runs to 115 residues: DNA-binding protein TV0008 (115 aa).

Positions 18–37 are disordered; the sequence is LQRQAMQRQMAEEEEKQREI.

This sequence belongs to the PDCD5 family.

The polypeptide is DNA-binding protein TV0008 (Thermoplasma volcanium (strain ATCC 51530 / DSM 4299 / JCM 9571 / NBRC 15438 / GSS1)).